A 184-amino-acid chain; its full sequence is Ribosome-recycling factor (184 aa).

The tract at residues 137 to 158 is disordered; the sequence is DSIKAKQKDGIPEDEAKRGQDE.

Belongs to the RRF family.

It localises to the cytoplasm. Functionally, responsible for the release of ribosomes from messenger RNA at the termination of protein biosynthesis. May increase the efficiency of translation by recycling ribosomes from one round of translation to another. The chain is Ribosome-recycling factor from Desulforamulus reducens (strain ATCC BAA-1160 / DSM 100696 / MI-1) (Desulfotomaculum reducens).